Consider the following 279-residue polypeptide: Pantothenate synthetase (279 aa).

Position 26-33 (26-33 (MGALHSGH)) interacts with ATP. H33 functions as the Proton donor in the catalytic mechanism. Q57 lines the (R)-pantoate pocket. Q57 is a beta-alanine binding site. 147–150 (GQKD) is an ATP binding site. Residue Q153 participates in (R)-pantoate binding. ATP is bound by residues I176 and 184 to 187 (ESSR).

Belongs to the pantothenate synthetase family. Homodimer.

The protein localises to the cytoplasm. It carries out the reaction (R)-pantoate + beta-alanine + ATP = (R)-pantothenate + AMP + diphosphate + H(+). It participates in cofactor biosynthesis; (R)-pantothenate biosynthesis; (R)-pantothenate from (R)-pantoate and beta-alanine: step 1/1. In terms of biological role, catalyzes the condensation of pantoate with beta-alanine in an ATP-dependent reaction via a pantoyl-adenylate intermediate. In Corynebacterium glutamicum (strain R), this protein is Pantothenate synthetase.